Reading from the N-terminus, the 99-residue chain is Integration host factor subunit alpha (99 aa).

This sequence belongs to the bacterial histone-like protein family. Heterodimer of an alpha and a beta chain.

Functionally, this protein is one of the two subunits of integration host factor, a specific DNA-binding protein that functions in genetic recombination as well as in transcriptional and translational control. The chain is Integration host factor subunit alpha from Alteromonas mediterranea (strain DSM 17117 / CIP 110805 / LMG 28347 / Deep ecotype).